Reading from the N-terminus, the 549-residue chain is Chaperonin GroEL (549 aa).

ATP contacts are provided by residues 29-32 (TLGP), lysine 50, 86-90 (DGTTT), glycine 414, 478-480 (NAA), and aspartate 494.

Belongs to the chaperonin (HSP60) family. As to quaternary structure, forms a cylinder of 14 subunits composed of two heptameric rings stacked back-to-back. Interacts with the co-chaperonin GroES.

The protein resides in the cytoplasm. The catalysed reaction is ATP + H2O + a folded polypeptide = ADP + phosphate + an unfolded polypeptide.. Together with its co-chaperonin GroES, plays an essential role in assisting protein folding. The GroEL-GroES system forms a nano-cage that allows encapsulation of the non-native substrate proteins and provides a physical environment optimized to promote and accelerate protein folding. The protein is Chaperonin GroEL of Psychrobacter cryohalolentis (strain ATCC BAA-1226 / DSM 17306 / VKM B-2378 / K5).